Here is a 152-residue protein sequence, read N- to C-terminus: Protein Smg homolog (152 aa).

This sequence belongs to the Smg family.

The sequence is that of Protein Smg homolog from Bordetella bronchiseptica (strain ATCC BAA-588 / NCTC 13252 / RB50) (Alcaligenes bronchisepticus).